The chain runs to 112 residues: UPF0145 protein MmarC6_1828 (112 aa).

The protein belongs to the UPF0145 family.

In Methanococcus maripaludis (strain C6 / ATCC BAA-1332), this protein is UPF0145 protein MmarC6_1828.